A 522-amino-acid polypeptide reads, in one-letter code: WEB family protein At2g38370 (522 aa).

Positions 1–32 (MAEFPEPGTVNPDSDLSNGRAEKPEIDTSAPF) are disordered. Coiled coils occupy residues 77–264 (ELQR…AARE) and 299–376 (ARSA…RSEN). 2 disordered regions span residues 374-397 (SENG…SRRE) and 458-493 (MSLG…RKRK). Over residues 473 to 486 (TVSKRSEGKENEKR) the composition is skewed to basic and acidic residues.

It belongs to the WEB family.

The sequence is that of WEB family protein At2g38370 from Arabidopsis thaliana (Mouse-ear cress).